A 465-amino-acid chain; its full sequence is MVTQATSVRWQLWIVAFGFFMQTLDTTIVNTALPSIAASLGENPLRMQSVIVSYVLTVAVMLPASGWLADRIGVKWVFFSAIILFTFGSLMCAQSATLNELILSRVLQGVGDAMMVPVGRLTVMKIVPREQYMAAMAFVTLPGQIGPLVGPALGGFLVEFASWHWIFLINLPVGVIGALATLLLMPNHKMSTRRFDISGFIMLAIGMATLTLALDGHTGLGLSPLAIAGLILCGVIALGSYWWHALGNRFALFSLHLFKNKIYTLGLVGSMSARIGSGMLPFMTPIFLQIGLGFSPFHAGLMMIPMIIGSMGMKRIIVQVVNRFGYRRVLVNATLLLAVVSLSLPLVAIMGWTLLMPVVLFFQGMLNALRFSTMNTLTLKTLPDRLASSGNSLLSMAMQLSMSIGVSTAGILLGTFAHHQVATNTPATHSAFLYSYLCMAIIIALPALIFNRVPPDTGANRHLAR.

Transmembrane regions (helical) follow at residues Leu12–Ala32, Ser49–Ala69, Ile72–Cys92, Phe138–Val158, Trp165–Met185, Phe195–Asp215, Gly219–Gly239, Leu267–Phe287, Ile290–Ser310, Val329–Gly351, Leu393–Leu413, and Ser430–Phe450.

This sequence belongs to the major facilitator superfamily. TCR/Tet family.

It localises to the cell inner membrane. The protein is Putative multidrug resistance protein MdtD of Yersinia pseudotuberculosis serotype I (strain IP32953).